The primary structure comprises 384 residues: Alpha-2B adrenergic receptor (384 aa).

Residues Ala1–Leu25 traverse the membrane as a helical segment. The Cytoplasmic segment spans residues Thr26–Leu36. A helical transmembrane segment spans residues Phe37–Leu62. Over Gly63–Cys72 the chain is Extracellular. A disulfide bridge connects residues Cys72 and Cys151. The chain crosses the membrane as a helical span at residues Glu73 to Leu95. At Asp96 to Xaa117 the chain is on the cytoplasmic side. A helical membrane pass occupies residues Gly118 to Asp140. The Extracellular portion of the chain corresponds to Gln141–Glu156. A helical transmembrane segment spans residues Ala157 to Leu180. Over Arg181 to Val348 the chain is Cytoplasmic. Residues Gly193 to Pro306 form a disordered region. Residues Pro288–Pro306 show a composition bias toward low complexity. The helical transmembrane segment at Leu349–Ile372 threads the bilayer. Residues Cys373–His381 lie on the Extracellular side of the membrane. Residues Gly382–Phe384 traverse the membrane as a helical segment.

It belongs to the G-protein coupled receptor 1 family. Adrenergic receptor subfamily. ADRA2B sub-subfamily. Interacts with RAB26. Interacts with PPP1R9B. Interacts with GGA1, GGA2 and GGA3.

The protein localises to the cell membrane. In terms of biological role, alpha-2 adrenergic receptors mediate the catecholamine-induced inhibition of adenylate cyclase through the action of G proteins. The chain is Alpha-2B adrenergic receptor (ADRA2B) from Echinops telfairi (Lesser hedgehog tenrec).